A 327-amino-acid polypeptide reads, in one-letter code: Malate dehydrogenase (327 aa).

11-17 provides a ligand contact to NAD(+); that stretch reads GAAGNIS. 2 residues coordinate substrate: Arg92 and Arg98. NAD(+) contacts are provided by residues Asn105, Gln112, and 129-131; that span reads VGN. Substrate contacts are provided by Asn131 and Arg162. The Proton acceptor role is filled by His187. The tract at residues 304–327 is disordered; it reads SQEKMKATEQELSEERDAVEHLLP.

The protein belongs to the LDH/MDH superfamily. MDH type 2 family.

It catalyses the reaction (S)-malate + NAD(+) = oxaloacetate + NADH + H(+). Functionally, catalyzes the reversible oxidation of malate to oxaloacetate. The chain is Malate dehydrogenase from Psychrobacter sp. (strain PRwf-1).